The primary structure comprises 66 residues: UPF0370 protein YpfN (66 aa).

Residues 4–24 (LAKYWWILVLVFLVGVLLNVI) form a helical membrane-spanning segment. Positions 39–66 (KPELPPHRDFNDKWDDEEDWPKKDQPKK) are disordered. Positions 42 to 51 (LPPHRDFNDK) are enriched in basic and acidic residues.

Belongs to the UPF0370 family.

It localises to the cell membrane. This chain is UPF0370 protein YpfN, found in Salmonella paratyphi A (strain AKU_12601).